The chain runs to 569 residues: Falcipain-1 (569 aa).

The Cytoplasmic portion of the chain corresponds to 1–35 (MVAIKEMKEFAFARPSLVETLNKKKKFLKKKEKRT). Positions 1–332 (MVAIKEMKEF…KRNEKDIFSK (332 aa)) are cleaved as a propeptide — activation peptide. The chain crosses the membrane as a helical; Signal-anchor for type II membrane protein span at residues 36–56 (FVLSIYAFITFIIFCIGILYF). Residues 57 to 569 (TNKSSAHNNN…IGEEVFYPIL (513 aa)) lie on the Lumenal side of the membrane. Asparagine 58, asparagine 98, asparagine 121, and asparagine 127 each carry an N-linked (GlcNAc...) asparagine glycan. Residues 97–118 (LNESSNEEDEEKYTLNSETYNN) form a disordered region. 3 disulfides stabilise this stretch: cysteine 354/cysteine 395, cysteine 388/cysteine 428, and cysteine 413/cysteine 433. Residue cysteine 357 is part of the active site. N-linked (GlcNAc...) asparagine glycans are attached at residues asparagine 479 and asparagine 487. Cysteines 482 and 558 form a disulfide. Residues histidine 488 and asparagine 533 contribute to the active site.

It belongs to the peptidase C1 family. In terms of processing, contains disulfide bonds.

It localises to the membrane. Its subcellular location is the cytoplasmic granule. Its function is as follows. Cysteine protease. In the mosquito midgut, required for parasite development. The polypeptide is Falcipain-1 (Plasmodium falciparum (isolate 3D7)).